Consider the following 614-residue polypeptide: Zinc finger protein ztf-7 (614 aa).

A compositionally biased stretch (gly residues) spans 1–10 (MSTSGSGGGN). The tract at residues 1 to 160 (MSTSGSGGGN…SRPKKPEKMS (160 aa)) is disordered. Positions 18 to 41 (NVASSPNANPKKNADTESSGGSKN) are enriched in polar residues. Over residues 54–69 (GSNSRNGSRTNSVSNS) the composition is skewed to low complexity. Positions 74-83 (NRKDWTDRKS) are enriched in basic and acidic residues. Acidic residues predominate over residues 132 to 150 (DYSDEYELDEPFSDSDDED). 2 consecutive C2H2-type zinc fingers follow at residues 356-380 (NECI…KRNH) and 447-470 (VVCL…KTTH).

Belongs to the ZNF277 family. In terms of assembly, interacts with rps-2.

Its subcellular location is the cytoplasm. Its function is as follows. Probable transcription factor. Limits the ability to tolerate cold environment or cold-warm stress. In complex with rps-2, mediates the cold-warm shock response by promoting translocation of components of the RNA exosome from the nucleolus to nucleoplasm. In Caenorhabditis elegans, this protein is Zinc finger protein ztf-7.